A 443-amino-acid polypeptide reads, in one-letter code: Chromosomal replication initiator protein DnaA (443 aa).

A domain I, interacts with DnaA modulators region spans residues 1–80; that stretch reads MFLEEKLNLV…ETCGDKIPVE (80 aa). Residues 80-104 are domain II; that stretch reads EILIETKAASPLQSILEKSFDQKDF. Residues 105 to 321 are domain III, AAA+ region; that stretch reads QFNPDYTFET…GALNDIYLYK (217 aa). Positions 148, 150, 151, and 152 each coordinate ATP. The segment at 322-443 is domain IV, binds dsDNA; the sequence is KSYSLLFLNL…ERISSKYKLQ (122 aa).

It belongs to the DnaA family. As to quaternary structure, oligomerizes as a right-handed, spiral filament on DNA at oriC.

The protein resides in the cytoplasm. Plays an essential role in the initiation and regulation of chromosomal replication. ATP-DnaA binds to the origin of replication (oriC) to initiate formation of the DNA replication initiation complex once per cell cycle. Binds the DnaA box (a 9 base pair repeat at the origin) and separates the double-stranded (ds)DNA. Forms a right-handed helical filament on oriC DNA; dsDNA binds to the exterior of the filament while single-stranded (ss)DNA is stabiized in the filament's interior. The ATP-DnaA-oriC complex binds and stabilizes one strand of the AT-rich DNA unwinding element (DUE), permitting loading of DNA polymerase. After initiation quickly degrades to an ADP-DnaA complex that is not apt for DNA replication. Binds acidic phospholipids. The protein is Chromosomal replication initiator protein DnaA of Leptospira interrogans serogroup Icterohaemorrhagiae serovar copenhageni (strain Fiocruz L1-130).